The primary structure comprises 581 residues: ATP-dependent RNA helicase DBP3 (581 aa).

The segment at 1–118 (MAATKHSLAD…ASSNSEAPSS (118 aa)) is disordered. 2 stretches are compositionally biased toward basic and acidic residues: residues 7 to 35 (SLAD…EKRE) and 53 to 62 (DADRAAEKER). Residues 63 to 73 (KKAKKAKKLEK) show a composition bias toward basic residues. 2 stretches are compositionally biased toward low complexity: residues 80–89 (AEASAEPAAE) and 106–118 (TTEA…APSS). The Q motif motif lies at 160–189 (LEFHQLPATNLLEKKPSPFANYKAPTPIQS). Residues 192–365 (WPFTLSGRDV…ATFMVSPVKI (174 aa)) form the Helicase ATP-binding domain. 205–212 (AETGSGKT) is an ATP binding site. A DEAD box motif is present at residues 311–314 (DEAD). The 150-residue stretch at 402-551 (RLLEVLKEHQ…PVPEDLLKFG (150 aa)) folds into the Helicase C-terminal domain.

The protein belongs to the DEAD box helicase family. DDX5/DBP2 subfamily.

The protein resides in the nucleus. The protein localises to the nucleolus. The enzyme catalyses ATP + H2O = ADP + phosphate + H(+). Its function is as follows. ATP-dependent RNA helicase required for 60S ribosomal subunit synthesis. Involved in efficient pre-rRNA processing, predominantly at site A3, which is necessary for the normal formation of 25S and 5.8S rRNAs. The polypeptide is ATP-dependent RNA helicase DBP3 (DBP3) (Gibberella zeae (strain ATCC MYA-4620 / CBS 123657 / FGSC 9075 / NRRL 31084 / PH-1) (Wheat head blight fungus)).